The primary structure comprises 1045 residues: Fibrosin-1-like protein (1045 aa).

Residues 1 to 12 (MEAKVRPSRRSR) are compositionally biased toward basic residues. Disordered stretches follow at residues 1–86 (MEAK…DGFA) and 99–315 (DMAL…THVP). A compositionally biased stretch (basic and acidic residues) spans 13–28 (AQRDRGRRREAARDAR). The segment covering 48 to 63 (GLRGAPPRGAAPAPRT) has biased composition (low complexity). A compositionally biased stretch (basic and acidic residues) spans 99–123 (DMALKPHERKEKWERRLIKKPRESE). The span at 183–197 (EATSSRDPLSDSSAH) shows a compositional bias: polar residues. The segment covering 270 to 280 (HAAPCPGPPPG) has biased composition (pro residues). At S340 the chain carries Phosphoserine. Basic residues predominate over residues 443 to 457 (QHTHQHTHQHTHQHQ). Disordered stretches follow at residues 443–462 (QHTH…TFAP) and 719–753 (EGSS…PKSV). Residues 741 to 750 (PSFPAPPPWP) show a composition bias toward pro residues. The residue at position 790 (S790) is a Phosphoserine. 2 disordered regions span residues 809 to 880 (ELGR…APLQ) and 910 to 961 (AAAP…PALD). Residues 817–837 (AEREAEPRVKESRSPAKEEAA) show a composition bias toward basic and acidic residues. K858 participates in a covalent cross-link: Glycyl lysine isopeptide (Lys-Gly) (interchain with G-Cter in SUMO2). Low complexity predominate over residues 910 to 922 (AAAPAPGSAALLE). Basic and acidic residues predominate over residues 923 to 949 (PPERPYRDREPHGYSPERLRGELERAR). A phosphoserine mark is found at S937 and S977. Phosphothreonine is present on residues T989 and T1010. The tract at residues 991-1045 (PAAAALGAPPPLVTAAGPPTPPGPPRSRTTPLGGLGPGEARDYSPSRNPPEVEAR) is disordered. The span at 998 to 1015 (APPPLVTAAGPPTPPGPP) shows a compositional bias: pro residues. Positions 1029-1045 (EARDYSPSRNPPEVEAR) are enriched in basic and acidic residues.

This sequence belongs to the AUTS2 family.

In Homo sapiens (Human), this protein is Fibrosin-1-like protein (FBRSL1).